Reading from the N-terminus, the 240-residue chain is Probable transcriptional regulatory protein YrbC (240 aa).

It belongs to the TACO1 family.

The protein localises to the cytoplasm. In Bacillus subtilis (strain 168), this protein is Probable transcriptional regulatory protein YrbC (yrbC).